The sequence spans 95 residues: Co-chaperonin GroES (95 aa).

It belongs to the GroES chaperonin family. As to quaternary structure, heptamer of 7 subunits arranged in a ring. Interacts with the chaperonin GroEL.

The protein resides in the cytoplasm. Together with the chaperonin GroEL, plays an essential role in assisting protein folding. The GroEL-GroES system forms a nano-cage that allows encapsulation of the non-native substrate proteins and provides a physical environment optimized to promote and accelerate protein folding. GroES binds to the apical surface of the GroEL ring, thereby capping the opening of the GroEL channel. This chain is Co-chaperonin GroES, found in Rickettsia rickettsii (strain Sheila Smith).